Consider the following 71-residue polypeptide: Sperm-associated antigen 11A (71 aa).

The first 19 residues, 1 to 19 (MIPRLLPFFASLLFAALLF), serve as a signal peptide directing secretion. 3 disulfides stabilise this stretch: C32–C61, C39–C54, and C44–C62.

This sequence belongs to the beta-defensin family.

Its subcellular location is the secreted. In terms of biological role, has antimicrobial activity against E.coli. Plays a role in the defense response in the male reproductive tract, contributing to sperm maturation, storage and protection. This is Sperm-associated antigen 11A from Mus musculus (Mouse).